Reading from the N-terminus, the 529-residue chain is Basal body-orientation factor 1 (529 aa).

Residues 1–13 show a composition bias toward basic residues; it reads MPSKGKDKKKGKS. The tract at residues 1–22 is disordered; it reads MPSKGKDKKKGKSRGKDTKKLI. Coiled-coil stretches lie at residues 55–198 and 271–361; these read DTSR…LKQE and IKEK…EVER. The disordered stretch occupies residues 510 to 529; that stretch reads GKVVLPTIPKGPQESDTGTF.

The protein belongs to the BBOF1 family. Interacts with MNS1 and ODF2.

It localises to the cytoplasm. Its subcellular location is the cytoskeleton. The protein resides in the cilium basal body. The protein localises to the flagellum axoneme. Its function is as follows. Plays an essential role in sperm motility and male fertility by stabilizing the sperm flagellar axonemal structure. May be required for the stability of ODF2 and MANS1 proteins. Dispensable for the assembly and function of motile cilia. This chain is Basal body-orientation factor 1, found in Macaca fascicularis (Crab-eating macaque).